The primary structure comprises 369 residues: Serpentine receptor class epsilon-2 (369 aa).

The Extracellular portion of the chain corresponds to 1–20 (MLIQYHKISNNDPNRIQLLS). The chain crosses the membrane as a helical span at residues 21–41 (MIFCEIILLIFELFEFAAIIF). At 42 to 55 (NMSRYQFHFNLKVV) the chain is on the cytoplasmic side. The helical transmembrane segment at 56–76 (VGYAIFAYWFDIIARITIAFF) threads the bilayer. Residues 77-118 (EIGLFNLDDQTIAVETEKLPWNYKNMFFMLLFCCSTYRVYFM) are Extracellular-facing. Residues 119-139 (FLICSVTLLLAVERFLATIWV) form a helical membrane-spanning segment. The Cytoplasmic portion of the chain corresponds to 140-148 (STYESVQHK). A helical membrane pass occupies residues 149-169 (WVSIVLTSTNSIAGIFGSLLF). At 170 to 178 (HYELIFDTA) the chain is on the extracellular side. Residues 179–199 (VWCSLGLCFNFVSIFLYVILF) traverse the membrane as a helical segment. The Cytoplasmic segment spans residues 200–234 (NSNKSKIELCQTREITQSYTLSLRFQLNENLKIMN). Residues 235-255 (WIKNSILVVTCFNTLLAGFLI) traverse the membrane as a helical segment. The Extracellular segment spans residues 256 to 274 (ASNNEYLKNDYPVLVKCCH). A helical transmembrane segment spans residues 275 to 295 (TFLNLGIAIYAQVVFFVAILA). At 296 to 369 (DRHFRTYFLR…VAKKKRFWRV (74 aa)) the chain is on the cytoplasmic side.

Belongs to the nematode receptor-like protein sre family.

The protein resides in the cell membrane. This Caenorhabditis elegans protein is Serpentine receptor class epsilon-2 (sre-2).